A 206-amino-acid polypeptide reads, in one-letter code: 2-phospho-L-lactate guanylyltransferase (206 aa).

It belongs to the CofC family. As to quaternary structure, homodimer.

The enzyme catalyses (2S)-2-phospholactate + GTP + H(+) = (2S)-lactyl-2-diphospho-5'-guanosine + diphosphate. It functions in the pathway cofactor biosynthesis; coenzyme F420 biosynthesis. In terms of biological role, guanylyltransferase that catalyzes the activation of (2S)-2-phospholactate (2-PL) as (2S)-lactyl-2-diphospho-5'-guanosine, via the condensation of 2-PL with GTP. It is involved in the biosynthesis of coenzyme F420, a hydride carrier cofactor. This chain is 2-phospho-L-lactate guanylyltransferase, found in Haloferax volcanii (strain ATCC 29605 / DSM 3757 / JCM 8879 / NBRC 14742 / NCIMB 2012 / VKM B-1768 / DS2) (Halobacterium volcanii).